The primary structure comprises 375 residues: Alcohol dehydrogenase 1A (375 aa).

G1 is modified (N-acetylglycine). Zn(2+) is bound by residues C46, H67, C97, C100, C103, C111, and C174. NAD(+)-binding positions include G199–G204, D223, K228, V293–L295, and R370.

It belongs to the zinc-containing alcohol dehydrogenase family. Class-I subfamily. As to quaternary structure, multimeric (with different ratios of monomers). The cofactor is Zn(2+).

The protein localises to the cytoplasm. It carries out the reaction a primary alcohol + NAD(+) = an aldehyde + NADH + H(+). The enzyme catalyses a secondary alcohol + NAD(+) = a ketone + NADH + H(+). In Saara hardwickii (Indian spiny-tailed lizard), this protein is Alcohol dehydrogenase 1A.